The sequence spans 231 residues: Phosphatidylserine decarboxylase proenzyme (231 aa).

S188 (schiff-base intermediate with substrate; via pyruvic acid) is an active-site residue. S188 carries the post-translational modification Pyruvic acid (Ser); by autocatalysis.

Belongs to the phosphatidylserine decarboxylase family. PSD-A subfamily. Heterodimer of a large membrane-associated beta subunit and a small pyruvoyl-containing alpha subunit. It depends on pyruvate as a cofactor. Post-translationally, is synthesized initially as an inactive proenzyme. Formation of the active enzyme involves a self-maturation process in which the active site pyruvoyl group is generated from an internal serine residue via an autocatalytic post-translational modification. Two non-identical subunits are generated from the proenzyme in this reaction, and the pyruvate is formed at the N-terminus of the alpha chain, which is derived from the carboxyl end of the proenzyme. The post-translation cleavage follows an unusual pathway, termed non-hydrolytic serinolysis, in which the side chain hydroxyl group of the serine supplies its oxygen atom to form the C-terminus of the beta chain, while the remainder of the serine residue undergoes an oxidative deamination to produce ammonia and the pyruvoyl prosthetic group on the alpha chain.

It is found in the cell membrane. It carries out the reaction a 1,2-diacyl-sn-glycero-3-phospho-L-serine + H(+) = a 1,2-diacyl-sn-glycero-3-phosphoethanolamine + CO2. Its pathway is phospholipid metabolism; phosphatidylethanolamine biosynthesis; phosphatidylethanolamine from CDP-diacylglycerol: step 2/2. In terms of biological role, catalyzes the formation of phosphatidylethanolamine (PtdEtn) from phosphatidylserine (PtdSer). This chain is Phosphatidylserine decarboxylase proenzyme, found in Rickettsia akari (strain Hartford).